Consider the following 376-residue polypeptide: Carbamoyl phosphate synthase small chain (376 aa).

The interval 1-184 (MKAILALADG…SEGYQQQTGE (184 aa)) is CPSase. Residues Ser45, Gly236, and Gly238 each coordinate L-glutamine. Positions 188–374 (KVVAYDFGIK…ADLMEKNRQS (187 aa)) constitute a Glutamine amidotransferase type-1 domain. The active-site Nucleophile is the Cys263. Residues Leu264, Gln267, Asn305, Gly307, and Phe308 each contribute to the L-glutamine site. Catalysis depends on residues His347 and Glu349.

The protein belongs to the CarA family. In terms of assembly, composed of two chains; the small (or glutamine) chain promotes the hydrolysis of glutamine to ammonia, which is used by the large (or ammonia) chain to synthesize carbamoyl phosphate. Tetramer of heterodimers (alpha,beta)4.

It carries out the reaction hydrogencarbonate + L-glutamine + 2 ATP + H2O = carbamoyl phosphate + L-glutamate + 2 ADP + phosphate + 2 H(+). It catalyses the reaction L-glutamine + H2O = L-glutamate + NH4(+). It functions in the pathway amino-acid biosynthesis; L-arginine biosynthesis; carbamoyl phosphate from bicarbonate: step 1/1. Its pathway is pyrimidine metabolism; UMP biosynthesis via de novo pathway; (S)-dihydroorotate from bicarbonate: step 1/3. Its function is as follows. Small subunit of the glutamine-dependent carbamoyl phosphate synthetase (CPSase). CPSase catalyzes the formation of carbamoyl phosphate from the ammonia moiety of glutamine, carbonate, and phosphate donated by ATP, constituting the first step of 2 biosynthetic pathways, one leading to arginine and/or urea and the other to pyrimidine nucleotides. The small subunit (glutamine amidotransferase) binds and cleaves glutamine to supply the large subunit with the substrate ammonia. The sequence is that of Carbamoyl phosphate synthase small chain from Syntrophotalea carbinolica (strain DSM 2380 / NBRC 103641 / GraBd1) (Pelobacter carbinolicus).